The following is a 599-amino-acid chain: Elongation factor 4 (599 aa).

Residues 5–187 (KNIRNFSIIA…QLVERIPAPE (183 aa)) enclose the tr-type G domain. Residues 17 to 22 (DHGKST) and 134 to 137 (NKID) each bind GTP.

The protein belongs to the TRAFAC class translation factor GTPase superfamily. Classic translation factor GTPase family. LepA subfamily.

The protein resides in the cell inner membrane. The catalysed reaction is GTP + H2O = GDP + phosphate + H(+). Its function is as follows. Required for accurate and efficient protein synthesis under certain stress conditions. May act as a fidelity factor of the translation reaction, by catalyzing a one-codon backward translocation of tRNAs on improperly translocated ribosomes. Back-translocation proceeds from a post-translocation (POST) complex to a pre-translocation (PRE) complex, thus giving elongation factor G a second chance to translocate the tRNAs correctly. Binds to ribosomes in a GTP-dependent manner. This is Elongation factor 4 from Alcanivorax borkumensis (strain ATCC 700651 / DSM 11573 / NCIMB 13689 / SK2).